Consider the following 147-residue polypeptide: Large ribosomal subunit protein uL13 (147 aa).

The disordered stretch occupies residues 128-147 (PEHPHSAQQPVPYELKQVAQ).

Belongs to the universal ribosomal protein uL13 family. As to quaternary structure, part of the 50S ribosomal subunit.

Its function is as follows. This protein is one of the early assembly proteins of the 50S ribosomal subunit, although it is not seen to bind rRNA by itself. It is important during the early stages of 50S assembly. The sequence is that of Large ribosomal subunit protein uL13 from Mycobacterium bovis (strain BCG / Pasteur 1173P2).